The chain runs to 454 residues: tRNA modification GTPase MnmE (454 aa).

(6S)-5-formyl-5,6,7,8-tetrahydrofolate-binding residues include Arg-23, Glu-80, and Lys-120. One can recognise a TrmE-type G domain in the interval 216-377; sequence GMKVVIAGRP…LRDHLKSSMG (162 aa). Asn-226 serves as a coordination point for K(+). GTP is bound by residues 226-231, 245-251, 270-273, 335-338, and 358-360; these read NAGKSS, TDIAGTT, DTAG, NKAD, and SAR. Residue Ser-230 participates in Mg(2+) binding. Residues Thr-245, Ile-247, and Thr-250 each contribute to the K(+) site. A Mg(2+)-binding site is contributed by Thr-251. Lys-454 provides a ligand contact to (6S)-5-formyl-5,6,7,8-tetrahydrofolate.

The protein belongs to the TRAFAC class TrmE-Era-EngA-EngB-Septin-like GTPase superfamily. TrmE GTPase family. Homodimer. Heterotetramer of two MnmE and two MnmG subunits. Requires K(+) as cofactor.

Its subcellular location is the cytoplasm. In terms of biological role, exhibits a very high intrinsic GTPase hydrolysis rate. Involved in the addition of a carboxymethylaminomethyl (cmnm) group at the wobble position (U34) of certain tRNAs, forming tRNA-cmnm(5)s(2)U34. The protein is tRNA modification GTPase MnmE of Erwinia tasmaniensis (strain DSM 17950 / CFBP 7177 / CIP 109463 / NCPPB 4357 / Et1/99).